A 359-amino-acid chain; its full sequence is Phosphate acyltransferase (359 aa).

Residues 338-359 (LEGAAGRAARPPPPRRASSHDA) are disordered.

Belongs to the PlsX family. In terms of assembly, homodimer. Probably interacts with PlsY.

It is found in the cytoplasm. The catalysed reaction is a fatty acyl-[ACP] + phosphate = an acyl phosphate + holo-[ACP]. The protein operates within lipid metabolism; phospholipid metabolism. In terms of biological role, catalyzes the reversible formation of acyl-phosphate (acyl-PO(4)) from acyl-[acyl-carrier-protein] (acyl-ACP). This enzyme utilizes acyl-ACP as fatty acyl donor, but not acyl-CoA. This is Phosphate acyltransferase from Anaeromyxobacter sp. (strain Fw109-5).